Consider the following 215-residue polypeptide: Ribonuclease T (215 aa).

The Exonuclease domain occupies 20-194; that stretch reads VVIDVETAGF…YDTERTAVLF (175 aa). The Mg(2+) site is built by D23, E25, H181, and D186. H181 (proton donor/acceptor) is an active-site residue.

Belongs to the RNase T family. In terms of assembly, homodimer. Requires Mg(2+) as cofactor.

In terms of biological role, trims short 3' overhangs of a variety of RNA species, leaving a one or two nucleotide 3' overhang. Responsible for the end-turnover of tRNA: specifically removes the terminal AMP residue from uncharged tRNA (tRNA-C-C-A). Also appears to be involved in tRNA biosynthesis. The polypeptide is Ribonuclease T (Shigella boydii serotype 4 (strain Sb227)).